The chain runs to 330 residues: Phytanoyl-CoA hydroxylase-interacting protein (330 aa).

One can recognise a Fibronectin type-III domain in the interval 6 to 115 (TPHSIEINNI…ETVEFCTGDY (110 aa)). N-linked (GlcNAc...) asparagine glycans are attached at residues Asn14 and Asn325.

The protein belongs to the PHYHIP family. As to quaternary structure, interacts with PHYH and ADGRB1. Highly expressed in the brain.

Its interaction with PHYH suggests a role in the development of the central system. The polypeptide is Phytanoyl-CoA hydroxylase-interacting protein (Phyhip) (Mus musculus (Mouse)).